A 2081-amino-acid chain; its full sequence is MEIYGFSPLSFQDTESWKNSAFAACRGCKTYPIEEVGTDGSVRIRELPVGLVLKGVMAQYRSILWTQFVADPATTTVDRKSFDFWLFCRRAEAAQERAFRARQSKRAAKAAALDAEGLIDRSYKGRTYKVSTRGLSWKSVRAAQKAARNAAKNFGFAISANPFSALSALPSEGKGLSAGETPATVAEVAPQCFWAALRSLKREFSETPVEDLPFLGLVLPALPQRNGELARTLRAQLRAHQAARVVASGVSLREIPRRTTTTVKVVVPRVTIPVVTFNGAVLHHPKHPVIVALLKRVTIRAKPICERRTYVRLVDGPGLFPSPRTPTLDLGFMEKVSELATMPGDSIEKCIAIKCILSNDYNFKEDADMGDVLLSLQSKYTGGGDTAEHRGFISGALYGAGVCVVTSAWKFLDATLHASQIGTQISQILDYIQSGLAWLSSSYASIANFFTKGKVYIMECLELVKAKLPSYLFSAEVGRYILLLLGVFLCLGLVNSLIYSVAPQYSLSFGTVCKISLGALALVGLGDLVAYLFNSPGAKLRAFVNIVCNMCGCKNFFAPSSDGEERSGFSVLSMMGAICALQSLLPANVSRFSWDCGKWAQTFKTGFDCHEKFATVCESLSVWLLSKVGLFKSSESQAMQTILLSSGINTCGWLEKVAAFHSDVHSSQICIPDLLLRARQLIETGDTISDLLSNSTVSLSFLLRERIKLALRELKEDHTQLQLAVDVSVSSECPFVLFFAGDSGVGKSTAMKKFREEVLDKLGYPKTARFYPRNPGEKFWSGYLRHTAVIYDDFAQIPQGDMTYDEAELIRIVTNAVVTVPMAIAEEKGRTFRSKFVFACTNRYCESEDAPLADEMAFRRRRHLYIHVARKPGVEPGPRGVDNLEFSEMDNRDSNGEPAYQLNDQGKRVLINQKLTYDQLLQLYFERYQAFKVLEGQLEGSVARAPSSSNYEGCDNWWTLVGSEAKFEAVYFNGEPVSEDDQLTQLGNYKTRYDILRARVILESIDYADCDFIIKNFSAMGEGIYHADPEVNATGQRHFSAMSPVTRRLICSCLKTRREDEIKSHSLLSKFKSLLTVPVDAWKAAPAWFKCISLLLVAGGVGYALCRAISGIIGIFRKGPAAASLALFSGGIGAVLRGDSPDDPREERDNPDVIVTKGRGKAIWAGAEIPEALEALRKSQVVLMGTGRKGEPVMCSALPITSHSVLCTTHEIEAFDPNQNMSLIVNNSIYSFVLIPGAIMYKRYDQPNLVDKVHELVRVDLPKNKGFSLNARAQFSEDFYDNGTAMKCWVVPNKNPAVADIMRKVDCEKSSQIIDIFASELSRSSGCEPVRQTQRFIYADGPALNGHCGRLLCANLAGHWRVIGMCAGEGKNRAGVTKALYADIPHEFLRADNLNAVQRGAELDAAILDRFSIPISECRKELTPMTTRLGYVVGQYPRALRKTSIVPSIIHDNLWRKPETEPTILGKIDDRSPFPYDPYATIGEKFVQEVGPIDLSVGSDASLVVANIGSSWKAVGKPQCPTVLTWEVAINGDAAIPYCERLPLSTSEGYPDSIQRNFGEKGKKRFFDLKGENVRVPTPALMEELEVLERELQKEEVCLTCINTACAKDEKTAPKKVRVQPKTRIFEILPFQINIIIRRYLMFWMQLLMVAHDELPSKVGINVYSESWDRLLGRHTRLANHFTGDYSGFDTSTPRVLVYAIIDKINELADDGEVNQRTRRNIIRFVLNRYLISDGVLYEIHGGTPSGFAPTVMINSVVNEFYLKWSWIGLLKEAGYANQATLYAFHEATEISLYGDDNFVSVATPVASVYNLTTISNFLGRIGVKLGDGAKTGTIKPFIPLEEVDFLKRQFVADSGSTAILCPLKKISIEERLFYVRGGQDEIAALELNIATALCEAFFHGKEYFSFLEGKIIEAMRKSGVALSRPLPTMESVRAWYMSQRGNTKIRSPSFEGLGTMSGILNIGLAEARSVGGVACFSGIEFRGRSDDHLMVIPTYIPGGWRTKQQQTYISFVRDSEKMAQVIKRVAHFSTVVATDKSMAYLVAICIAYSRGSISRMEVRCHVQNLKVAEMLLCNQICNFL.

2 helical membrane passes run 481 to 501 (ILLL…IYSV) and 515 to 535 (ISLG…LFNS). The SF3 helicase domain maps to 714-881 (LKEDHTQLQL…PGVEPGPRGV (168 aa)). ATP is bound at residue 741–748 (GDSGVGKS). The interval 877–900 (GPRGVDNLEFSEMDNRDSNGEPAY) is disordered. In terms of domain architecture, Peptidase C3 spans 1166 to 1388 (GAEIPEALEA…ALYADIPHEF (223 aa)). Active-site for picornain 3C-like protease activity residues include His-1210, Glu-1255, and Cys-1348. One can recognise a RdRp catalytic domain in the interval 1679-1810 (ANHFTGDYSG…SVATPVASVY (132 aa)).

It is found in the host membrane. The catalysed reaction is RNA(n) + a ribonucleoside 5'-triphosphate = RNA(n+1) + diphosphate. Picornain 3C-like protease is a thiol protease that probably cleaves the polyprotein. The polypeptide is RNA1 polyprotein (Citrus unshiu (Satsuma mandarin)).